A 356-amino-acid polypeptide reads, in one-letter code: MFPSLQSFAKKILASQHVLPEDYYHILKRCGLWWYKAPISLDCKHMLIRLPYFADGLDLNTALMIAAKENNYQLIKLFTEWGANINYGYICANTQPTREFCWELGANYRLDKKKVMHMFFKFIENKTSQYIILCHKLFNENPFPTYVIIREIKSSLYWRLRRLVEDEDLLRDVSDDDMLTLYCFMVALQNDLREAVSYFYQHFKHLNTWWLICALCFNKLFDLHYLYEQEKIRIDINEMMRIACTKDNNFLTMYYCFILGADINMAMLAAIQFFNMDNLFFCIDLGANAFEEAKALAEQRDYYLISHRLSLDIYHPDPSLFTLKEANPKKIYHLLNNYKSKSMSAYLDYHINDTTS.

Residues 58–90 (DLNTALMIAAKENNYQLIKLFTEWGANINYGYI) form an ANK repeat. A glycan (N-linked (GlcNAc...) asparagine; by host) is linked at asparagine 125. 2 helical membrane-spanning segments follow: residues 206–228 (LNTWWLICALCFNKLFDLHYLYE) and 249–271 (NFLTMYYCFILGADINMAMLAAI). Asparagine 352 carries an N-linked (GlcNAc...) asparagine; by host glycan.

The protein belongs to the asfivirus MGF 360 family.

It localises to the host membrane. Plays a role in virus cell tropism, and may be required for efficient virus replication in macrophages. In Ornithodoros (relapsing fever ticks), this protein is Protein MGF 360-10L.